We begin with the raw amino-acid sequence, 128 residues long: Large ribosomal subunit protein bL17 (128 aa).

The protein belongs to the bacterial ribosomal protein bL17 family. As to quaternary structure, part of the 50S ribosomal subunit. Contacts protein L32.

In Streptococcus pyogenes serotype M5 (strain Manfredo), this protein is Large ribosomal subunit protein bL17.